The sequence spans 92 residues: Small ribosomal subunit protein uS19 (92 aa).

Belongs to the universal ribosomal protein uS19 family.

Protein S19 forms a complex with S13 that binds strongly to the 16S ribosomal RNA. This Orientia tsutsugamushi (strain Boryong) (Rickettsia tsutsugamushi) protein is Small ribosomal subunit protein uS19.